A 222-amino-acid chain; its full sequence is Protein MKS1 (222 aa).

The tract at residues 1–61 (MDPSEYFAGG…PNRDQPPPYI (61 aa)) is disordered. Residues 12–21 (PSDQQNQKRQ) are compositionally biased toward polar residues. Ser-30 carries the post-translational modification Phosphoserine. Basic residues predominate over residues 37–46 (DSHKIKKPPK). The segment covering 47-61 (HPAPPPNRDQPPPYI) has biased composition (pro residues). Ser-72 carries the post-translational modification Phosphoserine. Residues 83 to 92 (FMNVVQRLTG) carry the VQ motif. Residues 105 to 130 (GDVSPAARLASTENASPRGGKEPAAR) form a disordered region. Ser-108 and Ser-120 each carry phosphoserine.

As to quaternary structure, interacts with MPK4, WRKY25 and WRKY33. In terms of processing, phosphorylated on serine residue by MPK4.

It is found in the nucleus. In terms of biological role, regulator of plant defense response. May contribute to MPK4-regulated defense activation by coupling the kinase to specific WRKY transcription factors. The chain is Protein MKS1 (MKS1) from Arabidopsis thaliana (Mouse-ear cress).